Consider the following 337-residue polypeptide: Regulator of RpoS (337 aa).

The Response regulatory domain maps to 9 to 123 (QILIVEDEQV…NRLREMVFAC (115 aa)). Asp58 carries the post-translational modification 4-aspartylphosphate.

It belongs to the RssB family. In terms of assembly, binds to RpoS. Post-translationally, phosphorylated. Phosphorylation stimulates the interaction with RpoS and, therefore, the proteolysis of RpoS.

Its function is as follows. Regulates the turnover of the sigma S factor (RpoS) by promoting its proteolysis in exponentially growing cells. Acts by binding and delivering RpoS to the ClpXP protease. RssB is not co-degraded with RpoS, but is released from the complex and can initiate a new cycle of RpoS recognition and degradation. This chain is Regulator of RpoS, found in Shigella flexneri.